The primary structure comprises 369 residues: Queuine tRNA-ribosyltransferase (369 aa).

Residue Asp89 is the Proton acceptor of the active site. Substrate contacts are provided by residues 89–93 (DSGGF), Asp142, Gln184, and Gly211. An RNA binding region spans residues 242–248 (GGGSPEL). The active-site Nucleophile is Asp261. Residues 266–270 (TRIAR) form an RNA binding; important for wobble base 34 recognition region. 4 residues coordinate Zn(2+): Cys299, Cys301, Cys304, and His330.

Belongs to the queuine tRNA-ribosyltransferase family. Homodimer. Within each dimer, one monomer is responsible for RNA recognition and catalysis, while the other monomer binds to the replacement base PreQ1. Requires Zn(2+) as cofactor.

It carries out the reaction 7-aminomethyl-7-carbaguanine + guanosine(34) in tRNA = 7-aminomethyl-7-carbaguanosine(34) in tRNA + guanine. It functions in the pathway tRNA modification; tRNA-queuosine biosynthesis. Catalyzes the base-exchange of a guanine (G) residue with the queuine precursor 7-aminomethyl-7-deazaguanine (PreQ1) at position 34 (anticodon wobble position) in tRNAs with GU(N) anticodons (tRNA-Asp, -Asn, -His and -Tyr). Catalysis occurs through a double-displacement mechanism. The nucleophile active site attacks the C1' of nucleotide 34 to detach the guanine base from the RNA, forming a covalent enzyme-RNA intermediate. The proton acceptor active site deprotonates the incoming PreQ1, allowing a nucleophilic attack on the C1' of the ribose to form the product. After dissociation, two additional enzymatic reactions on the tRNA convert PreQ1 to queuine (Q), resulting in the hypermodified nucleoside queuosine (7-(((4,5-cis-dihydroxy-2-cyclopenten-1-yl)amino)methyl)-7-deazaguanosine). The chain is Queuine tRNA-ribosyltransferase from Thermotoga maritima (strain ATCC 43589 / DSM 3109 / JCM 10099 / NBRC 100826 / MSB8).